Here is a 234-residue protein sequence, read N- to C-terminus: Large ribosomal subunit protein bL25 (234 aa).

Belongs to the bacterial ribosomal protein bL25 family. CTC subfamily. Part of the 50S ribosomal subunit; part of the 5S rRNA/L5/L18/L25 subcomplex. Contacts the 5S rRNA. Binds to the 5S rRNA independently of L5 and L18.

This is one of the proteins that binds to the 5S RNA in the ribosome where it forms part of the central protuberance. The chain is Large ribosomal subunit protein bL25 from Rhodopseudomonas palustris (strain BisA53).